A 407-amino-acid polypeptide reads, in one-letter code: Gonadotropin-releasing hormone receptor (407 aa).

Residues Met-1–Cys-36 lie on the Extracellular side of the membrane. Asn-5, Asn-11, and Asn-15 each carry an N-linked (GlcNAc...) asparagine glycan. Residues Val-37 to Phe-57 form a helical membrane-spanning segment. The Cytoplasmic portion of the chain corresponds to Arg-58 to Leu-69. A helical membrane pass occupies residues Ile-70–Ile-90. Residues Trp-91 to Lys-105 lie on the Extracellular side of the membrane. Cysteines 104 and 183 form a disulfide. A helical membrane pass occupies residues Ile-106 to Ala-126. The Cytoplasmic segment spans residues Leu-127–Arg-147. Residues Ile-148–Phe-168 form a helical membrane-spanning segment. Over Gln-169 to Ser-199 the chain is Extracellular. A helical transmembrane segment spans residues Ser-200–Leu-220. Topologically, residues Lys-221–Val-268 are cytoplasmic. A helical membrane pass occupies residues Ile-269–Phe-289. Residues Phe-290–Val-298 lie on the Extracellular side of the membrane. The helical transmembrane segment at Ile-299 to Phe-319 threads the bilayer. Residues Thr-320–Gly-407 are Cytoplasmic-facing. A disordered region spans residues Ser-377–Gly-407.

This sequence belongs to the G-protein coupled receptor 1 family. In terms of tissue distribution, widely expressed in peripheral nervous tissue, gonadal tissue and brain. In the brain, expression is high in the palliovisceral lobe and superior buccal lobe but low in the subvertical lobe, superior and inferior frontal lobe, posterior brachial lobe and pedal lobe. Expressed in stomach, rectum, aorta, heart, salivary gland, branchia, pancreas, radula retractor muscle, branchial vessel but not in white body, esophagus, liver and kidney.

It is found in the cell membrane. In terms of biological role, receptor for gonadotropin releasing hormone (GnRH) that mediates the action of GnRH to stimulate the secretion of the gonadotropic hormones luteinizing hormone (LH) and follicle-stimulating hormone (FSH). This receptor mediates its action by association with G-proteins that activate a phosphatidylinositol-calcium second messenger system. Ligand interaction triggers steroidogenesis in spermatozoa and follicles. Appears to be involved in contraction of the radula retractor muscle. The sequence is that of Gonadotropin-releasing hormone receptor from Octopus vulgaris (Common octopus).